Reading from the N-terminus, the 474-residue chain is Glycogen synthase (474 aa).

K12 contacts ADP-alpha-D-glucose.

This sequence belongs to the glycosyltransferase 1 family. Bacterial/plant glycogen synthase subfamily.

It carries out the reaction [(1-&gt;4)-alpha-D-glucosyl](n) + ADP-alpha-D-glucose = [(1-&gt;4)-alpha-D-glucosyl](n+1) + ADP + H(+). Its pathway is glycan biosynthesis; glycogen biosynthesis. Its function is as follows. Synthesizes alpha-1,4-glucan chains using ADP-glucose. The sequence is that of Glycogen synthase from Xanthomonas axonopodis pv. citri (strain 306).